A 1163-amino-acid polypeptide reads, in one-letter code: Carbamoyl phosphate synthase large chain (1163 aa).

The carboxyphosphate synthetic domain stretch occupies residues 1-456 (MPKRQDIKSI…SLQKALRGLE (456 aa)). Arginine 129 is a binding site for ATP. A disordered region spans residues 148–170 (LANATDIKDHDRKSHEAERSALK). Residues 153-170 (DIKDHDRKSHEAERSALK) show a composition bias toward basic and acidic residues. An ATP-grasp 1 domain is found at 185 to 381 (LENQWNLGEG…IAKIAAKLAV (197 aa)). Residues arginine 222, glycine 228, glycine 229, glutamate 261, valine 263, glutamate 268, glycine 294, valine 295, histidine 296, glutamine 338, and glutamate 352 each contribute to the ATP site. Glutamine 338, glutamate 352, and asparagine 354 together coordinate Mg(2+). Mn(2+)-binding residues include glutamine 338, glutamate 352, and asparagine 354. The oligomerization domain stretch occupies residues 457-614 (TGLTGLDEIE…PFVGAARSEA (158 aa)). The interval 615 to 1026 (QVSDRKKVVI…AFAKSQLGAG (412 aa)) is carbamoyl phosphate synthetic domain. Residues 743-955 (QKLLMKLDLN…IAKIAARVMA (213 aa)) enclose the ATP-grasp 2 domain. ATP is bound by residues arginine 779, serine 839, leucine 841, glutamate 846, glycine 871, isoleucine 872, histidine 873, serine 874, glutamine 914, and glutamate 926. Glutamine 914, glutamate 926, and asparagine 928 together coordinate Mg(2+). Positions 914, 926, and 928 each coordinate Mn(2+). In terms of domain architecture, MGS-like spans 1027–1163 (VDLPRDGTVF…VRPLQSYFET (137 aa)). Residues 1027-1163 (VDLPRDGTVF…VRPLQSYFET (137 aa)) form an allosteric domain region.

This sequence belongs to the CarB family. Composed of two chains; the small (or glutamine) chain promotes the hydrolysis of glutamine to ammonia, which is used by the large (or ammonia) chain to synthesize carbamoyl phosphate. Tetramer of heterodimers (alpha,beta)4. The cofactor is Mg(2+). Mn(2+) serves as cofactor.

It carries out the reaction hydrogencarbonate + L-glutamine + 2 ATP + H2O = carbamoyl phosphate + L-glutamate + 2 ADP + phosphate + 2 H(+). The enzyme catalyses hydrogencarbonate + NH4(+) + 2 ATP = carbamoyl phosphate + 2 ADP + phosphate + 2 H(+). It participates in amino-acid biosynthesis; L-arginine biosynthesis; carbamoyl phosphate from bicarbonate: step 1/1. Its pathway is pyrimidine metabolism; UMP biosynthesis via de novo pathway; (S)-dihydroorotate from bicarbonate: step 1/3. Large subunit of the glutamine-dependent carbamoyl phosphate synthetase (CPSase). CPSase catalyzes the formation of carbamoyl phosphate from the ammonia moiety of glutamine, carbonate, and phosphate donated by ATP, constituting the first step of 2 biosynthetic pathways, one leading to arginine and/or urea and the other to pyrimidine nucleotides. The large subunit (synthetase) binds the substrates ammonia (free or transferred from glutamine from the small subunit), hydrogencarbonate and ATP and carries out an ATP-coupled ligase reaction, activating hydrogencarbonate by forming carboxy phosphate which reacts with ammonia to form carbamoyl phosphate. This Rhizobium meliloti (strain 1021) (Ensifer meliloti) protein is Carbamoyl phosphate synthase large chain.